Reading from the N-terminus, the 395-residue chain is Elongation factor Tu (395 aa).

Residues 10–204 form the tr-type G domain; it reads KPHVNIGTIG…AVDEYIPTPQ (195 aa). The interval 19–26 is G1; that stretch reads GHVDHGKT. Residue 19–26 participates in GTP binding; the sequence is GHVDHGKT. Mg(2+) is bound at residue T26. Positions 60–64 are G2; that stretch reads GITIS. A G3 region spans residues 81–84; the sequence is DCPG. Residues 81–85 and 136–139 each bind GTP; these read DCPGH and NKCD. The interval 136-139 is G4; the sequence is NKCD. The G5 stretch occupies residues 174 to 176; it reads SAL.

The protein belongs to the TRAFAC class translation factor GTPase superfamily. Classic translation factor GTPase family. EF-Tu/EF-1A subfamily. In terms of assembly, monomer.

The protein localises to the cytoplasm. It catalyses the reaction GTP + H2O = GDP + phosphate + H(+). Functionally, GTP hydrolase that promotes the GTP-dependent binding of aminoacyl-tRNA to the A-site of ribosomes during protein biosynthesis. The chain is Elongation factor Tu from Geobacillus kaustophilus (strain HTA426).